Here is a 104-residue protein sequence, read N- to C-terminus: uncharacterized protein (104 aa).

The next 2 membrane-spanning stretches (helical) occupy residues Ile26–Phe46 and Gly70–Ile90.

It is found in the membrane. This is an uncharacterized protein from Acanthamoeba polyphaga mimivirus (APMV).